Consider the following 959-residue polypeptide: Oxysterol-binding protein-related protein 6 (959 aa).

Positions 1-60 (MSSDEKGISPAHKTSTPTHRSASSSTSSQRESRQSIHVLERTASSSTEPSVSRQLLEPEP) are disordered. S2 bears the N-acetylserine mark. A compositionally biased stretch (low complexity) spans 14-29 (TSTPTHRSASSSTSSQ). Positions 30–40 (RESRQSIHVLE) are enriched in basic and acidic residues. At S35 the chain carries Phosphoserine. Over residues 42–53 (TASSSTEPSVSR) the composition is skewed to polar residues. The region spanning 86–181 (PDRHEGFMLK…WVSKLRHHRL (96 aa)) is the PH domain. S190 and S290 each carry phosphoserine.

Belongs to the OSBP family. In terms of assembly, homodimer. Interacts with OSBPL3. Expressed in skin, respiratory epithelium, small intestine epithelium, pancreas, striated muscle, brain, spinal ganglia, and nervous plexus of the intestine (at protein level). In the brain, specifically in the cerebellum, it is expressed in Purkinje and granule cells. Expressed in hepatocytes and macrophages.

It localises to the nucleus envelope. The protein localises to the cytoplasm. It is found in the cytosol. The protein resides in the endoplasmic reticulum membrane. Its subcellular location is the cell membrane. It localises to the endosome membrane. In terms of biological role, regulates cellular transport and efflux of cholesterol. Plays a role in phosphatidylinositol-4-phophate (PI4P) turnover at the neuronal membrane. Binds via its PH domain PI4P, phosphatidylinositol-4,5-diphosphate, phosphatidylinositol-3,4,5-triphosphate, and phosphatidic acid. Weakly binds 25-hydroxycholesterol. This Mus musculus (Mouse) protein is Oxysterol-binding protein-related protein 6 (Osbpl6).